Here is a 333-residue protein sequence, read N- to C-terminus: D-fructose 1,6-bisphosphatase class 2/sedoheptulose 1,7-bisphosphatase (333 aa).

Mn(2+) is bound by residues aspartate 33, glutamate 57, aspartate 85, and glutamate 88. Residues 88 to 90, tyrosine 119, 164 to 166, and 186 to 188 contribute to the substrate site; these read EGT, RAR, and DGD. Glutamate 213 lines the Mn(2+) pocket.

The protein belongs to the FBPase class 2 family. In terms of assembly, homotetramer. Mn(2+) is required as a cofactor.

It catalyses the reaction beta-D-fructose 1,6-bisphosphate + H2O = beta-D-fructose 6-phosphate + phosphate. The catalysed reaction is D-sedoheptulose 1,7-bisphosphate + H2O = D-sedoheptulose 7-phosphate + phosphate. It functions in the pathway carbohydrate biosynthesis; Calvin cycle. In terms of biological role, catalyzes the hydrolysis of fructose 1,6-bisphosphate (Fru 1,6-P2) and sedoheptulose 1,7-bisphosphate (Sed 1,7-P2) to fructose 6-phosphate and sedoheptulose 7-phosphate, respectively. The sequence is that of D-fructose 1,6-bisphosphatase class 2/sedoheptulose 1,7-bisphosphatase from Prochlorococcus marinus (strain MIT 9515).